Here is a 269-residue protein sequence, read N- to C-terminus: uncharacterized protein (269 aa).

Residues 1-21 are disordered; that stretch reads MAYSSSNSDIEDDSSKSNSNL.

This is an uncharacterized protein from Homo sapiens (Human).